We begin with the raw amino-acid sequence, 464 residues long: tRNA-2-methylthio-N(6)-dimethylallyladenosine synthase (464 aa).

Positions 1–24 are disordered; that stretch reads MSDLVPLSRKPAPAAGGPAPSPAA. Residues 8-18 are compositionally biased toward low complexity; the sequence is SRKPAPAAGGP. One can recognise an MTTase N-terminal domain in the interval 27 to 142; it reads RKVYVHTFGC…LPEMVERARD (116 aa). C36, C72, C105, C180, C184, and C187 together coordinate [4Fe-4S] cluster. The Radical SAM core domain maps to 166–398; sequence ARGRVTAFVT…LAAQRRIAGE (233 aa). The TRAM domain maps to 401-464; sequence AGELGKVVEV…GGSSLSGTLA (64 aa).

This sequence belongs to the methylthiotransferase family. MiaB subfamily. In terms of assembly, monomer. [4Fe-4S] cluster serves as cofactor.

It is found in the cytoplasm. It carries out the reaction N(6)-dimethylallyladenosine(37) in tRNA + (sulfur carrier)-SH + AH2 + 2 S-adenosyl-L-methionine = 2-methylsulfanyl-N(6)-dimethylallyladenosine(37) in tRNA + (sulfur carrier)-H + 5'-deoxyadenosine + L-methionine + A + S-adenosyl-L-homocysteine + 2 H(+). In terms of biological role, catalyzes the methylthiolation of N6-(dimethylallyl)adenosine (i(6)A), leading to the formation of 2-methylthio-N6-(dimethylallyl)adenosine (ms(2)i(6)A) at position 37 in tRNAs that read codons beginning with uridine. This is tRNA-2-methylthio-N(6)-dimethylallyladenosine synthase from Anaeromyxobacter sp. (strain K).